A 552-amino-acid polypeptide reads, in one-letter code: FERRY endosomal RAB5 effector complex subunit 3 (552 aa).

Residue serine 79 is modified to Phosphoserine.

In terms of assembly, component of the FERRY complex composed of five subunits, TBCK, PPP1R21, FERRY3, CRYZL1 and GATD1 with a ratio of 1:2:1:2:4, respectively.

Its subcellular location is the cytoplasm. The protein resides in the early endosome. Functionally, component of the FERRY complex (Five-subunit Endosomal Rab5 and RNA/ribosome intermediary). The FERRY complex directly interacts with mRNAs and RAB5A, and functions as a RAB5A effector involved in the localization and the distribution of specific mRNAs most likely by mediating their endosomal transport. The complex recruits mRNAs and ribosomes to early endosomes through direct mRNA-interaction. Plays a role in mast cell degranulation. The polypeptide is FERRY endosomal RAB5 effector complex subunit 3 (Mus musculus (Mouse)).